We begin with the raw amino-acid sequence, 153 residues long: MKCPFCNSTDTQVKDSRSIENDMLIRRRRVCLVCHSRFTTTEKLLLRSFMVVKKNGETELFNKQKLLSSILIATKKRPVSHEGINMMVNNIFYELEGKKENAIPTNVIGKMVMDNLFKLDKVAYVRFASVYMNFRNINDFSNIIAKIISEKTP.

Residues 3–34 fold into a zinc finger; the sequence is CPFCNSTDTQVKDSRSIENDMLIRRRRVCLVC. The ATP-cone domain occupies 49–139; the sequence is FMVVKKNGET…VYMNFRNIND (91 aa).

Belongs to the NrdR family. The cofactor is Zn(2+).

Functionally, negatively regulates transcription of bacterial ribonucleotide reductase nrd genes and operons by binding to NrdR-boxes. The chain is Transcriptional repressor NrdR from Ehrlichia chaffeensis (strain ATCC CRL-10679 / Arkansas).